The chain runs to 324 residues: Pyruvate synthase subunit PorB (324 aa).

The [4Fe-4S] cluster site is built by Cys-26, Cys-29, and Cys-57. The tract at residues 150–172 (TGNQRSGSTPPGSDTTTAPVGKK) is disordered. The span at 155 to 166 (SGSTPPGSDTTT) shows a compositional bias: low complexity. Cys-228 is a binding site for [4Fe-4S] cluster.

Heterotetramer of one alpha, one beta, one delta and one gamma chain. The cofactor is [4Fe-4S] cluster.

It catalyses the reaction 2 oxidized [2Fe-2S]-[ferredoxin] + pyruvate + CoA = 2 reduced [2Fe-2S]-[ferredoxin] + acetyl-CoA + CO2 + H(+). The protein is Pyruvate synthase subunit PorB (porB) of Thermotoga maritima (strain ATCC 43589 / DSM 3109 / JCM 10099 / NBRC 100826 / MSB8).